The sequence spans 126 residues: Histone H2B type 1-K (126 aa).

Low complexity predominate over residues 1–12 (MPEPAKSAPAPK). Residues 1–36 (MPEPAKSAPAPKKGSKKAVTKAQKKDGKKRKRSRKE) are disordered. N-acetylproline is present on Pro2. Glu3 is modified (ADP-ribosyl glutamic acid). The residue at position 6 (Lys6) is an N6-(2-hydroxyisobutyryl)lysine; alternate. Lys6 carries the post-translational modification N6-(beta-hydroxybutyryl)lysine; alternate. N6-acetyllysine; alternate is present on Lys6. Lys6 is subject to N6-butyryllysine; alternate. Lys6 is modified (N6-crotonyllysine; alternate). An N6-lactoyllysine; alternate modification is found at Lys6. Lys6 is covalently cross-linked (Glycyl lysine isopeptide (Lys-Gly) (interchain with G-Cter in SUMO2); alternate). The residue at position 7 (Ser7) is an ADP-ribosylserine. Lys12 carries the N6-(beta-hydroxybutyryl)lysine; alternate modification. N6-acetyllysine; alternate is present on residues Lys12 and Lys13. Lys12 and Lys13 each carry N6-crotonyllysine; alternate. An N6-lactoyllysine; alternate modification is found at Lys12. An N6-(2-hydroxyisobutyryl)lysine; alternate modification is found at Lys13. The residue at position 15 (Ser15) is a Phosphoserine; by STK4/MST1. N6-acetyllysine; alternate occurs at positions 16, 17, 21, and 24. N6-crotonyllysine; alternate occurs at positions 16, 17, 21, and 24. N6-lactoyllysine; alternate is present on residues Lys16, Lys17, Lys21, and Lys24. Residues Lys17 and Lys21 each carry the N6-(beta-hydroxybutyryl)lysine; alternate modification. The residue at position 17 (Lys17) is an N6-glutaryllysine; alternate. 2 positions are modified to N6-(2-hydroxyisobutyryl)lysine; alternate: Lys21 and Lys24. An N6-butyryllysine; alternate modification is found at Lys21. Residue Lys21 forms a Glycyl lysine isopeptide (Lys-Gly) (interchain with G-Cter in SUMO2); alternate linkage. Lys25 carries the post-translational modification N6-(2-hydroxyisobutyryl)lysine. Lys35 is subject to N6-(2-hydroxyisobutyryl)lysine; alternate. The residue at position 35 (Lys35) is an N6-(beta-hydroxybutyryl)lysine; alternate. Lys35 carries the N6-crotonyllysine; alternate modification. Lys35 is modified (N6-glutaryllysine; alternate). Lys35 bears the N6-succinyllysine; alternate mark. Lys35 participates in a covalent cross-link: Glycyl lysine isopeptide (Lys-Gly) (interchain with G-Cter in ubiquitin); alternate. The residue at position 36 (Glu36) is a PolyADP-ribosyl glutamic acid. Ser37 bears the Phosphoserine; by AMPK mark. N6-(2-hydroxyisobutyryl)lysine; alternate occurs at positions 44, 47, and 58. N6-lactoyllysine; alternate is present on Lys44. 2 positions are modified to N6-glutaryllysine; alternate: Lys44 and Lys47. The residue at position 47 (Lys47) is an N6-methyllysine; alternate. Position 58 is an N6,N6-dimethyllysine; alternate (Lys58). Residue Arg80 is modified to Dimethylated arginine. Residue Lys86 is modified to N6-(2-hydroxyisobutyryl)lysine; alternate. N6-(beta-hydroxybutyryl)lysine; alternate is present on Lys86. Lys86 is subject to N6-acetyllysine; alternate. Lys86 bears the N6-lactoyllysine; alternate mark. Lys86 carries the post-translational modification N6,N6,N6-trimethyllysine; alternate. 2 positions are modified to omega-N-methylarginine: Arg87 and Arg93. The residue at position 109 (Lys109) is an N6-(2-hydroxyisobutyryl)lysine; alternate. An N6-lactoyllysine; alternate modification is found at Lys109. Residue Lys109 is modified to N6-glutaryllysine; alternate. Residue Lys109 is modified to N6-methyllysine; alternate. Ser113 is a glycosylation site (O-linked (GlcNAc) serine). Residue Thr116 is modified to Phosphothreonine. N6-(2-hydroxyisobutyryl)lysine; alternate is present on residues Lys117 and Lys121. 2 positions are modified to N6-(beta-hydroxybutyryl)lysine; alternate: Lys117 and Lys121. Lys117 and Lys121 each carry N6-lactoyllysine; alternate. 2 positions are modified to N6-glutaryllysine; alternate: Lys117 and Lys121. N6-succinyllysine; alternate is present on residues Lys117 and Lys121. At Lys117 the chain carries N6-malonyllysine; alternate. Lys117 is modified (N6-methylated lysine; alternate). Residue Lys121 forms a Glycyl lysine isopeptide (Lys-Gly) (interchain with G-Cter in ubiquitin); alternate linkage.

It belongs to the histone H2B family. In terms of assembly, the nucleosome is a histone octamer containing two molecules each of H2A, H2B, H3 and H4 assembled in one H3-H4 heterotetramer and two H2A-H2B heterodimers. The octamer wraps approximately 147 bp of DNA. Post-translationally, monoubiquitination at Lys-35 (H2BK34Ub) by the MSL1/MSL2 dimer is required for histone H3 'Lys-4' (H3K4me) and 'Lys-79' (H3K79me) methylation and transcription activation at specific gene loci, such as HOXA9 and MEIS1 loci. Similarly, monoubiquitination at Lys-121 (H2BK120Ub) by the RNF20/40 complex gives a specific tag for epigenetic transcriptional activation and is also prerequisite for histone H3 'Lys-4' and 'Lys-79' methylation. It also functions cooperatively with the FACT dimer to stimulate elongation by RNA polymerase II. H2BK120Ub also acts as a regulator of mRNA splicing: deubiquitination by USP49 is required for efficient cotranscriptional splicing of a large set of exons. Phosphorylation at Ser-37 (H2BS36ph) by AMPK in response to stress promotes transcription. Phosphorylated on Ser-15 (H2BS14ph) by STK4/MST1 during apoptosis; which facilitates apoptotic chromatin condensation. Also phosphorylated on Ser-15 in response to DNA double strand breaks (DSBs), and in correlation with somatic hypermutation and immunoglobulin class-switch recombination. In terms of processing, glcNAcylation at Ser-113 promotes monoubiquitination of Lys-121. It fluctuates in response to extracellular glucose, and associates with transcribed genes. Post-translationally, ADP-ribosylated by PARP1 or PARP2 on Ser-7 (H2BS6ADPr) in response to DNA damage. H2BS6ADPr promotes recruitment of CHD1L. Mono-ADP-ribosylated on Glu-3 (H2BE2ADPr) by PARP3 in response to single-strand breaks. Poly ADP-ribosylation on Glu-36 (H2BE35ADPr) by PARP1 regulates adipogenesis: it inhibits phosphorylation at Ser-37 (H2BS36ph), thereby blocking expression of pro-adipogenetic genes. Crotonylation (Kcr) is specifically present in male germ cells and marks testis-specific genes in post-meiotic cells, including X-linked genes that escape sex chromosome inactivation in haploid cells. Crotonylation marks active promoters and enhancers and confers resistance to transcriptional repressors. It is also associated with post-meiotically activated genes on autosomes. In terms of processing, lactylated in macrophages by EP300/P300 by using lactoyl-CoA directly derived from endogenous or exogenous lactate, leading to stimulates gene transcription.

The protein localises to the nucleus. Its subcellular location is the chromosome. Its function is as follows. Core component of nucleosome. Nucleosomes wrap and compact DNA into chromatin, limiting DNA accessibility to the cellular machineries which require DNA as a template. Histones thereby play a central role in transcription regulation, DNA repair, DNA replication and chromosomal stability. DNA accessibility is regulated via a complex set of post-translational modifications of histones, also called histone code, and nucleosome remodeling. In terms of biological role, has broad antibacterial activity. May contribute to the formation of the functional antimicrobial barrier of the colonic epithelium, and to the bactericidal activity of amniotic fluid. This Homo sapiens (Human) protein is Histone H2B type 1-K.